Consider the following 222-residue polypeptide: MRLILPADTEGIFLERKSRFTGVALVEGKKTLIHIHNTGRLPLLKKGKRVLLKRAESDRRKTGWDLLAVEHRDEFVFVHSGFHSIVAGKILEELFPGSTIESEKRFENSRFDFLIDRRTFVEVKGCTYEEDGVAMFPDAPTERGRRHIEELISSVKSGFKALLLILVFLESDCFLPNRNVDPAFSRVFWRALKSGVNIDVFRVKYDGEYLCSTEKLSICEEV.

This sequence belongs to the SfsA family.

This chain is Sugar fermentation stimulation protein homolog, found in Thermotoga petrophila (strain ATCC BAA-488 / DSM 13995 / JCM 10881 / RKU-1).